The chain runs to 1064 residues: MATPPYAELHCLSNYSFLRGASHPEELVARAWALGYQGLAITDECSLAGAVRAHTGLAELRRDLRAAADAPEASAQDRLLAERAEQFRLVFGAEFRLACGLKLVLLAKNRAGYGNLSALITLARQRSEKGSYRLVRADLDAISPAGAVPDCYALWLPDAASSAEDAHWFARRFGERGWLAVELHSGADDAAWLGRTAELAAAAGLPRLAAGDVHMHLRGRRPLQDTLTAIRLGTTVFEAGTALHPNGERHLRHPLRLARLYPAELLEAAARLALACDFQLDTLRYEYPQEIVPAGETPASYLRRETQAGLARRYPQGVPPAIADNVEQELALIIELGYEPFFLTVYDIVCFARDEGILCQGRGSAANSIVCYALGITEVDPARASLLFGRFISRERDEPPDIDVDFEHDRRETVIQYIYGKYGRDRAALAATVIRYRTRGALRDAGRALGFGQPQIDALARSLAWWDKRDQLPARLIELGLDPASPRVAKWLDLTGMLIGFPRHLSQHVGGFVISRGPLGRLVPIENAAMPERSVIQWDKEDLEALGLLKVDVLALGMLSVIRRSLELVGRRRGAPFALPHIPPKDAATFDMLCAADSVGVFQVESRAQMAMLPRLRPRQFYDLVVQVAIVRPGPIQGDMVHPYLTNRADPAASARTLARLPADVRAVLERTLGVPIFQEQVMKLAEVAAGFTPGEADQLRRAMASWRQKGHIERFKQKLRDGMKARGHDSDFADALCRQIEGFGEYGFPESHAASFALLAYASAWLKRHEPEAFLCGLLNSQPMGFYAPAQLLQDARRHGVEVRPVDVTASAWDATLEDLPADPDAGRRPAVRLGLREISGFPEAAALRVAEARAAAPFADTNDLARRAALQRRELDLLAAAGALQALAGHRRQAAWQVAGVCLQGDLFDAAPPPEAAVALAAPQEAEELLADYAATGFSLGRHPLALLRARLARGRFLQAAALARTPDRALVRVAGIVTGRQRPGTAQGVIFVTLEDETGSANVVVYAGLAERQRRELLGARLLGVFGQLQREGEVVHLLAKRLVDLSPWVGGLAARSRDFH.

It belongs to the DNA polymerase type-C family. DnaE2 subfamily.

It localises to the cytoplasm. The enzyme catalyses DNA(n) + a 2'-deoxyribonucleoside 5'-triphosphate = DNA(n+1) + diphosphate. DNA polymerase involved in damage-induced mutagenesis and translesion synthesis (TLS). It is not the major replicative DNA polymerase. The sequence is that of Error-prone DNA polymerase from Azoarcus sp. (strain BH72).